The sequence spans 163 residues: ATP synthase subunit b (163 aa).

A helical membrane pass occupies residues 10 to 29; the sequence is VFMQMFHFLLMLVVLRLFAY.

This sequence belongs to the ATPase B chain family. F-type ATPases have 2 components, F(1) - the catalytic core - and F(0) - the membrane proton channel. F(1) has five subunits: alpha(3), beta(3), gamma(1), delta(1), epsilon(1). F(0) has three main subunits: a(1), b(2) and c(10-14). The alpha and beta chains form an alternating ring which encloses part of the gamma chain. F(1) is attached to F(0) by a central stalk formed by the gamma and epsilon chains, while a peripheral stalk is formed by the delta and b chains.

It is found in the cell membrane. Functionally, f(1)F(0) ATP synthase produces ATP from ADP in the presence of a proton or sodium gradient. F-type ATPases consist of two structural domains, F(1) containing the extramembraneous catalytic core and F(0) containing the membrane proton channel, linked together by a central stalk and a peripheral stalk. During catalysis, ATP synthesis in the catalytic domain of F(1) is coupled via a rotary mechanism of the central stalk subunits to proton translocation. Its function is as follows. Component of the F(0) channel, it forms part of the peripheral stalk, linking F(1) to F(0). This is ATP synthase subunit b from Desulforudis audaxviator (strain MP104C).